We begin with the raw amino-acid sequence, 411 residues long: LL-diaminopimelate aminotransferase (411 aa).

The substrate site is built by Y15 and G42. Pyridoxal 5'-phosphate is bound by residues Y72, 108 to 109, Y132, N187, Y218, and 246 to 248; these read AK and SFS. Substrate-binding residues include K109, Y132, and N187. K249 bears the N6-(pyridoxal phosphate)lysine mark. Pyridoxal 5'-phosphate is bound by residues R257 and N292. Positions 292 and 388 each coordinate substrate.

Belongs to the class-I pyridoxal-phosphate-dependent aminotransferase family. LL-diaminopimelate aminotransferase subfamily. In terms of assembly, homodimer. Pyridoxal 5'-phosphate is required as a cofactor.

The catalysed reaction is (2S,6S)-2,6-diaminopimelate + 2-oxoglutarate = (S)-2,3,4,5-tetrahydrodipicolinate + L-glutamate + H2O + H(+). It participates in amino-acid biosynthesis; L-lysine biosynthesis via DAP pathway; LL-2,6-diaminopimelate from (S)-tetrahydrodipicolinate (aminotransferase route): step 1/1. Its function is as follows. Involved in the synthesis of meso-diaminopimelate (m-DAP or DL-DAP), required for both lysine and peptidoglycan biosynthesis. Catalyzes the direct conversion of tetrahydrodipicolinate to LL-diaminopimelate. This is LL-diaminopimelate aminotransferase from Crocosphaera subtropica (strain ATCC 51142 / BH68) (Cyanothece sp. (strain ATCC 51142)).